The sequence spans 81 residues: Cytochrome c oxidase subunit 7B2, mitochondrial (81 aa).

The N-terminal 25 residues, 1-25 (MMFPLARNALSSLKIQSILQSMARH), are a transit peptide targeting the mitochondrion. Topologically, residues 26 to 33 (SHVKHSPD) are mitochondrial matrix. Residues 34-60 (FHDKYGNAVLASGTAFCVATWVFTATQ) form a helical membrane-spanning segment. Residues 61 to 81 (IGIEWNLSPVGRVTPKEWKHQ) are Mitochondrial intermembrane-facing.

The protein belongs to the cytochrome c oxidase VIIb family. In terms of assembly, component of the cytochrome c oxidase (complex IV, CIV), a multisubunit enzyme composed of 14 subunits. The complex is composed of a catalytic core of 3 subunits MT-CO1, MT-CO2 and MT-CO3, encoded in the mitochondrial DNA, and 11 supernumerary subunits COX4I, COX5A, COX5B, COX6A, COX6B, COX6C, COX7A, COX7B, COX7C, COX8 and NDUFA4, which are encoded in the nuclear genome. The complex exists as a monomer or a dimer and forms supercomplexes (SCs) in the inner mitochondrial membrane with NADH-ubiquinone oxidoreductase (complex I, CI) and ubiquinol-cytochrome c oxidoreductase (cytochrome b-c1 complex, complex III, CIII), resulting in different assemblies (supercomplex SCI(1)III(2)IV(1) and megacomplex MCI(2)III(2)IV(2)).

It is found in the mitochondrion inner membrane. The protein operates within energy metabolism; oxidative phosphorylation. Component of the cytochrome c oxidase, the last enzyme in the mitochondrial electron transport chain which drives oxidative phosphorylation. The respiratory chain contains 3 multisubunit complexes succinate dehydrogenase (complex II, CII), ubiquinol-cytochrome c oxidoreductase (cytochrome b-c1 complex, complex III, CIII) and cytochrome c oxidase (complex IV, CIV), that cooperate to transfer electrons derived from NADH and succinate to molecular oxygen, creating an electrochemical gradient over the inner membrane that drives transmembrane transport and the ATP synthase. Cytochrome c oxidase is the component of the respiratory chain that catalyzes the reduction of oxygen to water. Electrons originating from reduced cytochrome c in the intermembrane space (IMS) are transferred via the dinuclear copper A center (CU(A)) of subunit 2 and heme A of subunit 1 to the active site in subunit 1, a binuclear center (BNC) formed by heme A3 and copper B (CU(B)). The BNC reduces molecular oxygen to 2 water molecules using 4 electrons from cytochrome c in the IMS and 4 protons from the mitochondrial matrix. The polypeptide is Cytochrome c oxidase subunit 7B2, mitochondrial (COX7B2) (Homo sapiens (Human)).